The sequence spans 91 residues: DNA-directed RNA polymerase subunit omega (91 aa).

It belongs to the RNA polymerase subunit omega family. In terms of assembly, the RNAP catalytic core consists of 2 alpha, 1 beta, 1 beta' and 1 omega subunit. When a sigma factor is associated with the core the holoenzyme is formed, which can initiate transcription. The rRNA transcription and antitermination complex (rrnTAC) consists of RNAP, NusA, NusB, NusE (rpsJ), NusG, SubB, ribosomal protein S4, DNA and precursor rRNA; S4 is more flexible than other subunits.

The enzyme catalyses RNA(n) + a ribonucleoside 5'-triphosphate = RNA(n+1) + diphosphate. In terms of biological role, promotes RNA polymerase (RNAP) assembly. Latches the N- and C-terminal regions of the beta' subunit thereby facilitating its interaction with the beta and alpha subunits. Functionally, part of the processive rRNA transcription and antitermination complex (rrnTAC). The complex forms an RNA-chaperone ring around the RNA exit tunnel of RNAP. It supports rapid transcription and antitermination of rRNA operons, cotranscriptional rRNA folding, and annealing of distal rRNA regions to allow correct ribosome biogenesis. The protein is DNA-directed RNA polymerase subunit omega (rpoZ) of Escherichia coli (strain K12).